A 254-amino-acid polypeptide reads, in one-letter code: Proteasome subunit alpha (254 aa).

The interval 231–254 (ESGAASADGEAETEAETDSGSDEE) is disordered. Over residues 239–254 (GEAETEAETDSGSDEE) the composition is skewed to acidic residues.

Belongs to the peptidase T1A family. The 20S proteasome core is composed of 14 alpha and 14 beta subunits that assemble into four stacked heptameric rings, resulting in a barrel-shaped structure. The two inner rings, each composed of seven catalytic beta subunits, are sandwiched by two outer rings, each composed of seven alpha subunits. The catalytic chamber with the active sites is on the inside of the barrel. Has probably a gated structure, the ends of the cylinder being occluded by the N-termini of the alpha-subunits. Is likely capped by the proteasome-associated ATPase, ARC. In terms of processing, the N-terminus is blocked.

Its subcellular location is the cytoplasm. It functions in the pathway protein degradation; proteasomal Pup-dependent pathway. Its activity is regulated as follows. The formation of the proteasomal ATPase ARC-20S proteasome complex, likely via the docking of the C-termini of ARC into the intersubunit pockets in the alpha-rings, may trigger opening of the gate for substrate entry. Interconversion between the open-gate and close-gate conformations leads to a dynamic regulation of the 20S proteasome proteolysis activity. Peptidolytic activity is completely inhibited by lactacystin, and to a lesser extent, by N-acetyl-Leu-Leu-norleucinal (Ac-LLnL) and benzoyloxycarbonyl-Leu-Leu-Leu-vinylsulfone (Z-LLL-VS) in vitro. Its function is as follows. Component of the proteasome core, a large protease complex with broad specificity involved in protein degradation. The S.coelicolor proteasome is able to cleave oligopeptides after hydrophobic residues, but not after basic or acidic residues, thus displaying chymotrypsin-like activity but not trypsin-like activity. The protein is Proteasome subunit alpha of Streptomyces coelicolor (strain ATCC BAA-471 / A3(2) / M145).